We begin with the raw amino-acid sequence, 246 residues long: 2-deoxyglucose-6-phosphate phosphatase 1 (246 aa).

Residue aspartate 83 is the Nucleophile of the active site. Aspartate 83 provides a ligand contact to Mg(2+). Substrate contacts are provided by residues aspartate 83, glutamate 92, and 146–149 (DVKN). Aspartate 183 lines the Mg(2+) pocket.

Belongs to the HAD-like hydrolase superfamily. DOG/GPP family. Requires Mg(2+) as cofactor.

The catalysed reaction is 2-deoxy-D-glucose 6-phosphate + H2O = 2-deoxy-D-glucose + phosphate. In terms of biological role, phosphatase that is active on 2-deoxy-D-glucose 6-phosphate (2-DOG-6P), as well as on fructose-1-P. The sequence is that of 2-deoxyglucose-6-phosphate phosphatase 1 from Saccharomyces cerevisiae (strain ATCC 204508 / S288c) (Baker's yeast).